The chain runs to 944 residues: UvrABC system protein A (944 aa).

33-40 serves as a coordination point for ATP; sequence GLSGSGKS. The C4-type zinc-finger motif lies at 252–279; the sequence is CPICGFSIGELEPRMFSFNSPFGACPTC. ABC transporter domains follow at residues 309-587 and 607-935; these read WEPT…KKSL and ITDR…QYLK. 639-646 contributes to the ATP binding site; that stretch reads GVSGSGKS. The segment at 738–764 adopts a C4-type zinc-finger fold; that stretch reads CEACKGDGIIKIEMHFLPDVYVPCEVC.

It belongs to the ABC transporter superfamily. UvrA family. In terms of assembly, forms a heterotetramer with UvrB during the search for lesions.

Its subcellular location is the cytoplasm. Functionally, the UvrABC repair system catalyzes the recognition and processing of DNA lesions. UvrA is an ATPase and a DNA-binding protein. A damage recognition complex composed of 2 UvrA and 2 UvrB subunits scans DNA for abnormalities. When the presence of a lesion has been verified by UvrB, the UvrA molecules dissociate. This Staphylococcus epidermidis (strain ATCC 35984 / DSM 28319 / BCRC 17069 / CCUG 31568 / BM 3577 / RP62A) protein is UvrABC system protein A.